Consider the following 295-residue polypeptide: Phosphatidylserine decarboxylase proenzyme (295 aa).

Residues Asp113, His169, and Ser256 each act as charge relay system; for autoendoproteolytic cleavage activity in the active site. Ser256 functions as the Schiff-base intermediate with substrate; via pyruvic acid; for decarboxylase activity in the catalytic mechanism. Ser256 is subject to Pyruvic acid (Ser); by autocatalysis.

It belongs to the phosphatidylserine decarboxylase family. PSD-B subfamily. Prokaryotic type II sub-subfamily. As to quaternary structure, heterodimer of a large membrane-associated beta subunit and a small pyruvoyl-containing alpha subunit. The cofactor is pyruvate. In terms of processing, is synthesized initially as an inactive proenzyme. Formation of the active enzyme involves a self-maturation process in which the active site pyruvoyl group is generated from an internal serine residue via an autocatalytic post-translational modification. Two non-identical subunits are generated from the proenzyme in this reaction, and the pyruvate is formed at the N-terminus of the alpha chain, which is derived from the carboxyl end of the proenzyme. The autoendoproteolytic cleavage occurs by a canonical serine protease mechanism, in which the side chain hydroxyl group of the serine supplies its oxygen atom to form the C-terminus of the beta chain, while the remainder of the serine residue undergoes an oxidative deamination to produce ammonia and the pyruvoyl prosthetic group on the alpha chain. During this reaction, the Ser that is part of the protease active site of the proenzyme becomes the pyruvoyl prosthetic group, which constitutes an essential element of the active site of the mature decarboxylase.

It is found in the cell membrane. The catalysed reaction is a 1,2-diacyl-sn-glycero-3-phospho-L-serine + H(+) = a 1,2-diacyl-sn-glycero-3-phosphoethanolamine + CO2. The protein operates within phospholipid metabolism; phosphatidylethanolamine biosynthesis; phosphatidylethanolamine from CDP-diacylglycerol: step 2/2. Catalyzes the formation of phosphatidylethanolamine (PtdEtn) from phosphatidylserine (PtdSer). The protein is Phosphatidylserine decarboxylase proenzyme of Clostridium novyi (strain NT).